We begin with the raw amino-acid sequence, 514 residues long: Cytochrome P450 monooxygenase MO6277 (514 aa).

Residues 6 to 26 (LTVLALLGGTLLLYCSGLVIY) traverse the membrane as a helical segment. Cys457 serves as a coordination point for heme.

It belongs to the cytochrome P450 family. Requires heme as cofactor.

It localises to the membrane. It carries out the reaction polyporic acid + reduced [NADPH--hemoprotein reductase] + O2 = ascocorynin + oxidized [NADPH--hemoprotein reductase] + H2O + H(+). The protein operates within secondary metabolite biosynthesis. In terms of biological role, cytochrome P450 monooxygenase that hydroxylates polyporic acid produced by the nonribosomal peptide synthetase acyN to produce the less toxic metabolite ascocorynin. The hydrophobic substrate polyporic acid might approach the active site from the membrane and, after hydroxylation into ascocorynin, leaves into the cytoplasm. MO6277 appears vital to avoid high-level accumulation of polyporic acid in the fungal membrane. This Ascocoryne sarcoides (Purple jellydisc fungus) protein is Cytochrome P450 monooxygenase MO6277.